The sequence spans 712 residues: Lactoperoxidase (712 aa).

Residues 1–22 (MWVCLQLPVFLASVTLFEVAAS) form the signal peptide. The propeptide occupies 23 to 100 (DTIAQAASTT…WEESFKRLRR (78 aa)). A glycan (N-linked (GlcNAc...) (complex) asparagine; alternate) is linked at Asn106. Asn106 is a glycosylation site (N-linked (GlcNAc...) (hybrid) asparagine; alternate). 4 disulfides stabilise this stretch: Cys123/Cys284, Cys132/Cys145, Cys246/Cys256, and Cys250/Cys274. Residue Asn212 is glycosylated (N-linked (GlcNAc...) (complex) asparagine; alternate). An N-linked (GlcNAc...) (high mannose) asparagine; alternate glycan is attached at Asn212. Asp225 contacts heme b. His226 functions as the Proton acceptor in the catalytic mechanism. Asp227 lines the Ca(2+) pocket. Residues Thr301, Phe303, Asp305, and Ser307 each coordinate Ca(2+). A Phosphoserine modification is found at Ser315. N-linked (GlcNAc...) (high mannose) asparagine glycosylation is present at Asn322. A disulfide bond links Cys354 and Cys365. N-linked (GlcNAc...) asparagine glycosylation occurs at Asn358. Residue Glu375 coordinates heme b. N-linked (GlcNAc...) (complex) asparagine; alternate glycosylation is present at Asn449. The N-linked (GlcNAc...) (hybrid) asparagine; alternate glycan is linked to Asn449. An N-linked (GlcNAc...) (high mannose) asparagine; alternate glycan is attached at Asn449. His468 is a heme b binding site. A 3'-nitrotyrosine modification is found at Tyr482. Cystine bridges form between Cys573-Cys630 and Cys671-Cys696.

This sequence belongs to the peroxidase family. XPO subfamily. Ca(2+) is required as a cofactor. The cofactor is heme b. Mammary gland; milk.

The protein localises to the secreted. Its subcellular location is the cytoplasm. It carries out the reaction 2 a phenolic donor + H2O2 = 2 a phenolic radical donor + 2 H2O. The catalysed reaction is thiocyanate + H2O2 + H(+) = hypothiocyanous acid + H2O. The enzyme catalyses iodide + H2O2 = hypoiodite + H2O. Functionally, heme-containing oxidoreductase which catalyzes the conversion of thiocyanate (SCN(-)) into antimicrobial agent hypothiocyanous acid (OSCN(-)) in the presence of hydrogen peroxide (H2O2). Also involved in the conversion of iodide (I(-)) into hypoiodite (IO(-)) in the presence of H2O2. Responsible for the inactivation of a wide range of micro-organisms and hence, important component of defense mechanism. Shows antibacterial properties against E.coli, K.pneumoniae, P.aeruginosa, S.sonnei, S.saphrophyticus, S.epidermidis and S.dysenteriae. May protect the udder from infection and may promote growth in newborns. May be implicated in airway host defense against infection. May contribute to maintaining an appropriate H2O2 cellular level, therefore protecting cells from H2O2-caused injuries and inflammation. In Bubalus bubalis (Domestic water buffalo), this protein is Lactoperoxidase.